The following is a 333-amino-acid chain: 6-phosphogluconolactonase (333 aa).

The protein belongs to the cycloisomerase 2 family.

It catalyses the reaction 6-phospho-D-glucono-1,5-lactone + H2O = 6-phospho-D-gluconate + H(+). It participates in carbohydrate degradation; pentose phosphate pathway; D-ribulose 5-phosphate from D-glucose 6-phosphate (oxidative stage): step 2/3. Its function is as follows. Catalyzes the hydrolysis of 6-phosphogluconolactone to 6-phosphogluconate. The chain is 6-phosphogluconolactonase from Cronobacter sakazakii (strain ATCC BAA-894) (Enterobacter sakazakii).